A 101-amino-acid chain; its full sequence is Chaperone modulatory protein CbpM (101 aa).

This sequence belongs to the CbpM family.

In terms of biological role, interacts with CbpA and inhibits both the DnaJ-like co-chaperone activity and the DNA binding activity of CbpA. Together with CbpA, modulates the activity of the DnaK chaperone system. Does not inhibit the co-chaperone activity of DnaJ. The protein is Chaperone modulatory protein CbpM of Escherichia coli (strain K12 / MC4100 / BW2952).